A 302-amino-acid chain; its full sequence is tRNA pseudouridine synthase B (302 aa).

Catalysis depends on Asp43, which acts as the Nucleophile.

The protein belongs to the pseudouridine synthase TruB family. Type 1 subfamily.

It carries out the reaction uridine(55) in tRNA = pseudouridine(55) in tRNA. Responsible for synthesis of pseudouridine from uracil-55 in the psi GC loop of transfer RNAs. The sequence is that of tRNA pseudouridine synthase B from Burkholderia mallei (strain NCTC 10247).